The sequence spans 194 residues: uncharacterized protein (194 aa).

Disordered stretches follow at residues 1–21 (MPKG…APPL) and 73–97 (PATV…PWPS). Positions 73–96 (PATVPPPPPGLGPPSERPCPPPWP) are enriched in pro residues.

This is an uncharacterized protein from Mus musculus (Mouse).